We begin with the raw amino-acid sequence, 693 residues long: Elongation factor G (693 aa).

One can recognise a tr-type G domain in the interval 8–282 (EKTRNIGIMA…AVIDYLPSPL (275 aa)). GTP contacts are provided by residues 17–24 (AHVDAGKT), 81–85 (DTPGH), and 135–138 (NKMD).

This sequence belongs to the TRAFAC class translation factor GTPase superfamily. Classic translation factor GTPase family. EF-G/EF-2 subfamily.

Its subcellular location is the cytoplasm. Catalyzes the GTP-dependent ribosomal translocation step during translation elongation. During this step, the ribosome changes from the pre-translocational (PRE) to the post-translocational (POST) state as the newly formed A-site-bound peptidyl-tRNA and P-site-bound deacylated tRNA move to the P and E sites, respectively. Catalyzes the coordinated movement of the two tRNA molecules, the mRNA and conformational changes in the ribosome. The chain is Elongation factor G from Streptococcus suis (strain 05ZYH33).